Reading from the N-terminus, the 179-residue chain is Large ribosomal subunit protein uL5 (179 aa).

This sequence belongs to the universal ribosomal protein uL5 family. Part of the 50S ribosomal subunit; part of the 5S rRNA/L5/L18/L25 subcomplex. Contacts the 5S rRNA and the P site tRNA. Forms a bridge to the 30S subunit in the 70S ribosome.

Functionally, this is one of the proteins that bind and probably mediate the attachment of the 5S RNA into the large ribosomal subunit, where it forms part of the central protuberance. In the 70S ribosome it contacts protein S13 of the 30S subunit (bridge B1b), connecting the 2 subunits; this bridge is implicated in subunit movement. Contacts the P site tRNA; the 5S rRNA and some of its associated proteins might help stabilize positioning of ribosome-bound tRNAs. This chain is Large ribosomal subunit protein uL5, found in Alcanivorax borkumensis (strain ATCC 700651 / DSM 11573 / NCIMB 13689 / SK2).